A 381-amino-acid polypeptide reads, in one-letter code: Cytochrome b (381 aa).

Transmembrane regions (helical) follow at residues 33–53 (FGSL…FLAM), 77–98 (WLLR…FLHV), 113–133 (WNIG…GYVL), and 178–198 (FFAF…VHLL). Residues H83 and H97 each coordinate heme b. Residues H182 and H196 each coordinate heme b. H201 lines the a ubiquinone pocket. 4 helical membrane-spanning segments follow: residues 226-246 (IKDA…ALFS), 288-308 (LGGV…PLLH), 320-340 (ISQT…WIGG), and 347-367 (FIII…VLMP).

Belongs to the cytochrome b family. As to quaternary structure, the cytochrome bc1 complex contains 11 subunits: 3 respiratory subunits (MT-CYB, CYC1 and UQCRFS1), 2 core proteins (UQCRC1 and UQCRC2) and 6 low-molecular weight proteins (UQCRH/QCR6, UQCRB/QCR7, UQCRQ/QCR8, UQCR10/QCR9, UQCR11/QCR10 and a cleavage product of UQCRFS1). This cytochrome bc1 complex then forms a dimer. Heme b is required as a cofactor.

Its subcellular location is the mitochondrion inner membrane. In terms of biological role, component of the ubiquinol-cytochrome c reductase complex (complex III or cytochrome b-c1 complex) that is part of the mitochondrial respiratory chain. The b-c1 complex mediates electron transfer from ubiquinol to cytochrome c. Contributes to the generation of a proton gradient across the mitochondrial membrane that is then used for ATP synthesis. This chain is Cytochrome b (MT-CYB), found in Pseudantechinus bilarni (Sandstone dibbler).